A 172-amino-acid chain; its full sequence is Shikimate kinase (172 aa).

11 to 16 (GSGKTT) contributes to the ATP binding site. Thr-15 is a Mg(2+) binding site. Residues Asp-33, Arg-57, and Gly-79 each coordinate substrate. Arg-117 is a binding site for ATP. Residue Arg-136 participates in substrate binding.

It belongs to the shikimate kinase family. Monomer. Mg(2+) serves as cofactor.

It localises to the cytoplasm. The catalysed reaction is shikimate + ATP = 3-phosphoshikimate + ADP + H(+). It functions in the pathway metabolic intermediate biosynthesis; chorismate biosynthesis; chorismate from D-erythrose 4-phosphate and phosphoenolpyruvate: step 5/7. Its function is as follows. Catalyzes the specific phosphorylation of the 3-hydroxyl group of shikimic acid using ATP as a cosubstrate. The chain is Shikimate kinase from Caldicellulosiruptor saccharolyticus (strain ATCC 43494 / DSM 8903 / Tp8T 6331).